The chain runs to 408 residues: Solute carrier family 35 member F1 (408 aa).

A disordered region spans residues 1–21 (MIPPEQPQQQLQPPSPAPPNH). The next 10 membrane-spanning stretches (helical) occupy residues 60-80 (MLIS…IGLT), 94-114 (VFQS…TLAV), 129-147 (WWKY…YLVV), 158-178 (IQLL…FFLL), 186-206 (FIGI…DVLV), 221-241 (LLVL…EYII), 247-267 (VEFL…QLAI), 284-304 (LLYV…PVVI), 311-331 (SVNL…LFLF), and 335-355 (FSGL…LYSS).

It belongs to the SLC35F solute transporter family.

The protein localises to the cytoplasmic vesicle. The protein resides in the secretory vesicle. Its subcellular location is the synaptic vesicle membrane. Putative solute transporter. The chain is Solute carrier family 35 member F1 (SLC35F1) from Homo sapiens (Human).